The primary structure comprises 474 residues: Cyclin-dependent kinase 18 (474 aa).

Serine 14, serine 74, serine 89, serine 98, serine 117, and serine 132 each carry phosphoserine. The interval 44–93 (NLQLGPLGRDPPQECSTFSPTDSGEEPGQLSPGVQFQRRQNQRRFSMEDV) is disordered. Residues 144 to 425 (YVKLDKLGEG…AEAALSHSYF (282 aa)) form the Protein kinase domain. ATP-binding positions include 150 to 158 (LGEGTYATV) and lysine 173. Aspartate 265 (proton acceptor) is an active-site residue. Serine 440 and serine 443 each carry phosphoserine.

It belongs to the protein kinase superfamily. CMGC Ser/Thr protein kinase family. CDC2/CDKX subfamily. As to expression, isoform 2 expression is limited to several subcortical nuclei of the basal gangli and the spinal cord. Isoform 1 is widely expressed.

It catalyses the reaction L-seryl-[protein] + ATP = O-phospho-L-seryl-[protein] + ADP + H(+). It carries out the reaction L-threonyl-[protein] + ATP = O-phospho-L-threonyl-[protein] + ADP + H(+). Its function is as follows. May play a role in signal transduction cascades in terminally differentiated cells. The chain is Cyclin-dependent kinase 18 (CDK18) from Homo sapiens (Human).